A 427-amino-acid chain; its full sequence is Synaptotagmin-A (427 aa).

Residues 1–57 (MKLTEAYHDALAALPATPPLPTAVANATEAAAGSEEGKQDGFSKVKVKEKFMNELNK) are Vesicular-facing. Residue N26 is glycosylated (N-linked (GlcNAc...) asparagine). A helical membrane pass occupies residues 58–84 (IPLPPWALVAIAIVAIILGLTCCFCIC). Residues 85 to 427 (KKCLLKKKNK…EVDATLGMKK (343 aa)) lie on the Cytoplasmic side of the membrane. Positions 96 to 145 (KGKEKGGKNAMTMKDVKEMGKSGKEQALKDEDEDAETGLTTDGKEEEKED) are disordered. Basic and acidic residues predominate over residues 109-124 (KDVKEMGKSGKEQALK). The interval 141–387 (EEKEDEKLGK…AIGKVFVGYN (247 aa)) is phospholipid binding. C2 domains are found at residues 147 to 266 (KLGK…EEWR) and 278 to 411 (KLGD…AQWH). Ca(2+) contacts are provided by L177, D178, D184, D236, F237, D238, S241, K242, D244, D309, D315, D369, D371, and D377.

It belongs to the synaptotagmin family. In terms of assembly, homodimer or homotrimer (possible). Requires Ca(2+) as cofactor. As to expression, forebrain, cerebellum and neuroendocrine cells.

It localises to the cytoplasmic vesicle. The protein resides in the secretory vesicle. The protein localises to the synaptic vesicle membrane. Its subcellular location is the synapse. May have a regulatory role in the membrane interactions during trafficking of synaptic vesicles at the active zone of the synapse. It binds acidic phospholipids with a specificity that requires the presence of both an acidic head group and a diacyl backbone. This is Synaptotagmin-A (P65-A) from Diplobatis ommata (Ocellated electric ray).